A 433-amino-acid polypeptide reads, in one-letter code: D-amino acid dehydrogenase (433 aa).

Residue 3 to 17 (VLVLGSGVIGTTSAY) coordinates FAD.

This sequence belongs to the DadA oxidoreductase family. The cofactor is FAD.

The enzyme catalyses a D-alpha-amino acid + A + H2O = a 2-oxocarboxylate + AH2 + NH4(+). Functionally, oxidative deamination of D-amino acids. This chain is D-amino acid dehydrogenase, found in Pseudomonas syringae pv. tomato (strain ATCC BAA-871 / DC3000).